A 502-amino-acid chain; its full sequence is Lysine--tRNA ligase (502 aa).

Mg(2+) is bound by residues Glu-413 and Glu-420.

It belongs to the class-II aminoacyl-tRNA synthetase family. Homodimer. Mg(2+) is required as a cofactor.

It localises to the cytoplasm. The catalysed reaction is tRNA(Lys) + L-lysine + ATP = L-lysyl-tRNA(Lys) + AMP + diphosphate. This is Lysine--tRNA ligase from Haemophilus influenzae (strain PittGG).